The following is a 244-amino-acid chain: 3-deoxy-manno-octulosonate cytidylyltransferase (244 aa).

This sequence belongs to the KdsB family.

The protein localises to the cytoplasm. The catalysed reaction is 3-deoxy-alpha-D-manno-oct-2-ulosonate + CTP = CMP-3-deoxy-beta-D-manno-octulosonate + diphosphate. It participates in nucleotide-sugar biosynthesis; CMP-3-deoxy-D-manno-octulosonate biosynthesis; CMP-3-deoxy-D-manno-octulosonate from 3-deoxy-D-manno-octulosonate and CTP: step 1/1. It functions in the pathway bacterial outer membrane biogenesis; lipopolysaccharide biosynthesis. Activates KDO (a required 8-carbon sugar) for incorporation into bacterial lipopolysaccharide in Gram-negative bacteria. The sequence is that of 3-deoxy-manno-octulosonate cytidylyltransferase from Wolinella succinogenes (strain ATCC 29543 / DSM 1740 / CCUG 13145 / JCM 31913 / LMG 7466 / NCTC 11488 / FDC 602W) (Vibrio succinogenes).